The sequence spans 243 residues: Pyridoxine 5'-phosphate synthase (243 aa).

Position 9 (N9) interacts with 3-amino-2-oxopropyl phosphate. 11–12 (DH) is a binding site for 1-deoxy-D-xylulose 5-phosphate. R20 provides a ligand contact to 3-amino-2-oxopropyl phosphate. Residue H45 is the Proton acceptor of the active site. Residues R47 and H52 each coordinate 1-deoxy-D-xylulose 5-phosphate. The Proton acceptor role is filled by E72. T102 lines the 1-deoxy-D-xylulose 5-phosphate pocket. H193 (proton donor) is an active-site residue. 3-amino-2-oxopropyl phosphate contacts are provided by residues G194 and 215-216 (GH).

It belongs to the PNP synthase family. In terms of assembly, homooctamer; tetramer of dimers.

The protein localises to the cytoplasm. The enzyme catalyses 3-amino-2-oxopropyl phosphate + 1-deoxy-D-xylulose 5-phosphate = pyridoxine 5'-phosphate + phosphate + 2 H2O + H(+). It participates in cofactor biosynthesis; pyridoxine 5'-phosphate biosynthesis; pyridoxine 5'-phosphate from D-erythrose 4-phosphate: step 5/5. Its function is as follows. Catalyzes the complicated ring closure reaction between the two acyclic compounds 1-deoxy-D-xylulose-5-phosphate (DXP) and 3-amino-2-oxopropyl phosphate (1-amino-acetone-3-phosphate or AAP) to form pyridoxine 5'-phosphate (PNP) and inorganic phosphate. The chain is Pyridoxine 5'-phosphate synthase from Shigella boydii serotype 4 (strain Sb227).